We begin with the raw amino-acid sequence, 456 residues long: Adenylosuccinate synthetase isozyme 2 (456 aa).

The tract at residues 1–24 is disordered; that stretch reads MAFAETNPAASSLPNGDCGRPRAR. Residues 39-45 and 67-69 each bind GTP; these read GDEGKGK and GHT. Catalysis depends on Asp40, which acts as the Proton acceptor. Asp40 and Gly67 together coordinate Mg(2+). Asp40 is a binding site for substrate. IMP is bound by residues 40–43, 65–68, Thr162, Arg176, Asn255, Thr270, and Arg334; these read DEGK and NAGH. His68 functions as the Proton donor in the catalytic mechanism. 330–336 provides a ligand contact to substrate; it reads VTTGRKR. Residues Arg336, 362–364, and 444–447 each bind GTP; these read KLD and GVGK.

Belongs to the adenylosuccinate synthetase family. As to quaternary structure, homodimer. It depends on Mg(2+) as a cofactor. In terms of tissue distribution, widely expressed.

Its subcellular location is the cytoplasm. The protein localises to the mitochondrion. It carries out the reaction IMP + L-aspartate + GTP = N(6)-(1,2-dicarboxyethyl)-AMP + GDP + phosphate + 2 H(+). The protein operates within purine metabolism; AMP biosynthesis via de novo pathway; AMP from IMP: step 1/2. Its activity is regulated as follows. Inhibited competitively by AMP and IMP and non-competitively by fructose 1,6-bisphosphate. In terms of biological role, plays an important role in the de novo pathway and in the salvage pathway of purine nucleotide biosynthesis. Catalyzes the first committed step in the biosynthesis of AMP from IMP. The protein is Adenylosuccinate synthetase isozyme 2 of Sus scrofa (Pig).